The chain runs to 119 residues: Large ribosomal subunit protein bL20 (119 aa).

This sequence belongs to the bacterial ribosomal protein bL20 family.

Binds directly to 23S ribosomal RNA and is necessary for the in vitro assembly process of the 50S ribosomal subunit. It is not involved in the protein synthesizing functions of that subunit. The sequence is that of Large ribosomal subunit protein bL20 from Listeria innocua serovar 6a (strain ATCC BAA-680 / CLIP 11262).